We begin with the raw amino-acid sequence, 90 residues long: uncharacterized protein (90 aa).

The next 2 membrane-spanning stretches (helical) occupy residues 23-43 and 48-68; these read ITTIHLLSSIGAINWGLVGLF and VTLLFGSFPIIVTIFYIIIGF.

It is found in the cell membrane. This is an uncharacterized protein from Rickettsia prowazekii (strain Madrid E).